The sequence spans 276 residues: Putative glycosyltransferase 6 domain-containing protein 1 (276 aa).

Residues 1-6 lie on the Cytoplasmic side of the membrane; the sequence is MNSKRM. A helical; Signal-anchor for type II membrane protein membrane pass occupies residues 7–23; sequence LLLVLFAFSLMLVERYF. Topologically, residues 24 to 276 are lumenal; it reads RNHQVEELRL…NKYFYLNKPT (253 aa). N-linked (GlcNAc...) asparagine glycosylation occurs at N74. Substrate is bound by residues 82–87, 173–175, and 195–198; these read FATGRF, AAN, and HAWW. E263 (nucleophile) is an active-site residue.

Belongs to the glycosyltransferase 6 family. Mn(2+) serves as cofactor. As to expression, expressed in both healthy and inflamed gingival tissue samples at similar levels, with higher expression in the gingival connective tissue compared to gingival epithelium. Strongest expression in testis, followed by leukocytes.

It localises to the membrane. In Homo sapiens (Human), this protein is Putative glycosyltransferase 6 domain-containing protein 1 (GLT6D1).